We begin with the raw amino-acid sequence, 117 residues long: MTKTFFSFSFFFTSSLLLLLAATSATASTGNVTSGLRYDGCAPGDTVGECITATVEEEDEEGVEAVVRRILQQRKYLSYKTLQKQPTCDGRIAGNCIGTVNPKGATCTYYQRCKRAA.

A signal peptide spans 1-27; it reads MTKTFFSFSFFFTSSLLLLLAATSATA. Positions 28 to 71 are cleaved as a propeptide — removed in mature form; it reads STGNVTSGLRYDGCAPGDTVGECITATVEEEDEEGVEAVVRRIL. N-linked (GlcNAc...) asparagine glycosylation occurs at Asn-31. Cystine bridges form between Cys-88-Cys-96 and Cys-107-Cys-113.

The protein belongs to the plant rapid alkalinization factor (RALF) family.

The protein resides in the secreted. Functionally, cell signaling peptide that may regulate plant stress, growth, and development. Mediates a rapid alkalinization of extracellular space by mediating a transient increase in the cytoplasmic Ca(2+) concentration leading to a calcium-dependent signaling events through a cell surface receptor and a concomitant activation of some intracellular mitogen-activated protein kinases. The chain is Protein RALF-like 27 (RALFL27) from Arabidopsis thaliana (Mouse-ear cress).